An 860-amino-acid chain; its full sequence is GPI ethanolamine phosphate transferase 2 (860 aa).

Asn-123 and Asn-180 each carry an N-linked (GlcNAc...) asparagine glycan. The next 8 helical transmembrane spans lie at 408-428, 438-458, 459-479, 487-506, 524-544, 555-575, 576-596, and 639-659; these read LGGIGLGLLSTILALTVFSAL, LYLIILLVYFISVFGSSTVEE, EHQIWYWITSGWMAFLYISGS, FNWMFVQVFVRMMISWNQTG, NHPVLWILILVTYGVAFNKVW, LAFLLTLITTFASVGFKITQA, WEAGEVVPAPLLYLMGLPGTL, and AFLTLFLITQSRIQNIPLFMV. Asn-672 carries an N-linked (GlcNAc...) asparagine glycan. 4 helical membrane passes run 692-712, 736-756, 795-815, and 834-854; these read LVLVLSVSTLLLEQVSFFSMG, FVGVLTFVSNWIGPLYWSTAG, VYVVLAFSSVAISAVMITCFF, and FVWTVLQFALVDVILSSIFVV.

Belongs to the PIGG/PIGN/PIGO family. PIGG subfamily.

The protein resides in the endoplasmic reticulum membrane. It participates in glycolipid biosynthesis; glycosylphosphatidylinositol-anchor biosynthesis. Ethanolamine phosphate transferase involved in glycosylphosphatidylinositol-anchor biosynthesis. Transfers ethanolamine phosphate to the GPI second mannose. The protein is GPI ethanolamine phosphate transferase 2 (LAS21) of Yarrowia lipolytica (strain CLIB 122 / E 150) (Yeast).